The chain runs to 149 residues: MSKKASILVIQGPNLNLLGSRESDVYGKTTLEDIHQKLGELATAQSVDLSTYQSNHEGELIDRIQKAKQDGVDFIIINPGAFTHTSVALRDVLAGVAIPFTEVHLSNIHQREEFRKHSYLSDIATGVICGLGAIGYELALQAAITRIKK.

The active-site Proton acceptor is Y26. Substrate contacts are provided by N78, H84, and D91. The Proton donor role is filled by H104. Residues 105 to 106 (LS) and R115 contribute to the substrate site.

The protein belongs to the type-II 3-dehydroquinase family. Homododecamer.

It carries out the reaction 3-dehydroquinate = 3-dehydroshikimate + H2O. It functions in the pathway metabolic intermediate biosynthesis; chorismate biosynthesis; chorismate from D-erythrose 4-phosphate and phosphoenolpyruvate: step 3/7. Functionally, catalyzes a trans-dehydration via an enolate intermediate. In Polynucleobacter necessarius subsp. necessarius (strain STIR1), this protein is 3-dehydroquinate dehydratase.